We begin with the raw amino-acid sequence, 241 residues long: Uridylate kinase (241 aa).

15–18 (KMSG) is a binding site for ATP. The involved in allosteric activation by GTP stretch occupies residues 23 to 28 (GAEGFG). Glycine 57 serves as a coordination point for UMP. ATP-binding residues include glycine 58 and arginine 62. Residues aspartate 77 and 138–145 (TGNPLFTT) each bind UMP. The ATP site is built by threonine 165, phenylalanine 171, and aspartate 174.

Belongs to the UMP kinase family. As to quaternary structure, homohexamer.

The protein resides in the cytoplasm. It carries out the reaction UMP + ATP = UDP + ADP. The protein operates within pyrimidine metabolism; CTP biosynthesis via de novo pathway; UDP from UMP (UMPK route): step 1/1. Its activity is regulated as follows. Allosterically activated by GTP. Inhibited by UTP. Its function is as follows. Catalyzes the reversible phosphorylation of UMP to UDP. The polypeptide is Uridylate kinase (Blochmanniella pennsylvanica (strain BPEN)).